The sequence spans 94 residues: Putative pterin-4-alpha-carbinolamine dehydratase (94 aa).

Belongs to the pterin-4-alpha-carbinolamine dehydratase family.

The catalysed reaction is (4aS,6R)-4a-hydroxy-L-erythro-5,6,7,8-tetrahydrobiopterin = (6R)-L-erythro-6,7-dihydrobiopterin + H2O. The sequence is that of Putative pterin-4-alpha-carbinolamine dehydratase from Koribacter versatilis (strain Ellin345).